Here is a 399-residue protein sequence, read N- to C-terminus: Probable 2-isopropylmalate synthase (399 aa).

The region spanning 20–272 (VRIFDTTLRD…RTGVNTKLLY (253 aa)) is the Pyruvate carboxyltransferase domain. 4 residues coordinate a divalent metal cation: Asp-29, His-210, His-212, and Asn-246.

It belongs to the alpha-IPM synthase/homocitrate synthase family. In terms of assembly, homodimer. It depends on a divalent metal cation as a cofactor.

The catalysed reaction is 3-methyl-2-oxobutanoate + acetyl-CoA + H2O = (2S)-2-isopropylmalate + CoA + H(+). Its pathway is amino-acid biosynthesis; L-leucine biosynthesis; L-leucine from 3-methyl-2-oxobutanoate: step 1/4. Its function is as follows. Catalyzes the condensation of the acetyl group of acetyl-CoA with 3-methyl-2-oxobutanoate (2-oxoisovalerate) to form 3-carboxy-3-hydroxy-4-methylpentanoate (2-isopropylmalate). The protein is Probable 2-isopropylmalate synthase (leuA) of Ignicoccus hospitalis (strain KIN4/I / DSM 18386 / JCM 14125).